We begin with the raw amino-acid sequence, 273 residues long: Probable ribosomal RNA small subunit methyltransferase A (273 aa).

Positions 23, 25, 50, 71, 95, and 110 each coordinate S-adenosyl-L-methionine.

This sequence belongs to the class I-like SAM-binding methyltransferase superfamily. rRNA adenine N(6)-methyltransferase family. RsmA subfamily.

Its subcellular location is the cytoplasm. Functionally, specifically dimethylates two adjacent adenosines in the loop of a conserved hairpin near the 3'-end of 16S rRNA in the 30S particle. May play a critical role in biogenesis of 30S subunits. This is Probable ribosomal RNA small subunit methyltransferase A from Thermococcus sibiricus (strain DSM 12597 / MM 739).